The chain runs to 92 residues: UPF0298 protein ABC2380 (92 aa).

This sequence belongs to the UPF0298 family.

The protein localises to the cytoplasm. This Shouchella clausii (strain KSM-K16) (Alkalihalobacillus clausii) protein is UPF0298 protein ABC2380.